We begin with the raw amino-acid sequence, 397 residues long: tRNA-specific 2-thiouridylase MnmA (397 aa).

ATP-binding positions include 19 to 26 and Leu45; that span reads AMSGGVDS. Cys113 serves as the catalytic Nucleophile. A disulfide bridge links Cys113 with Cys210. An ATP-binding site is contributed by Gly137. The tract at residues 160–162 is interaction with tRNA; sequence RDQ. Cys210 acts as the Cysteine persulfide intermediate in catalysis.

It belongs to the MnmA/TRMU family.

Its subcellular location is the cytoplasm. The enzyme catalyses S-sulfanyl-L-cysteinyl-[protein] + uridine(34) in tRNA + AH2 + ATP = 2-thiouridine(34) in tRNA + L-cysteinyl-[protein] + A + AMP + diphosphate + H(+). In terms of biological role, catalyzes the 2-thiolation of uridine at the wobble position (U34) of tRNA, leading to the formation of s(2)U34. This is tRNA-specific 2-thiouridylase MnmA from Bradyrhizobium sp. (strain ORS 278).